We begin with the raw amino-acid sequence, 490 residues long: Betaine aldehyde dehydrogenase (490 aa).

K(+) is bound by residues T26, I27, and D93. Residue 150–152 (GAW) coordinates NAD(+). K162 (charge relay system) is an active-site residue. 176–179 (KPSE) provides a ligand contact to NAD(+). V180 serves as a coordination point for K(+). 230–233 (GTST) contacts NAD(+). A K(+)-binding site is contributed by L246. The active-site Proton acceptor is the E252. NAD(+) is bound by residues G254, C286, and E387. Residue C286 is the Nucleophile of the active site. C286 is modified (cysteine sulfenic acid (-SOH)). Residues K457 and G460 each coordinate K(+). The active-site Charge relay system is the E464.

Belongs to the aldehyde dehydrogenase family. Dimer of dimers. Requires K(+) as cofactor.

The enzyme catalyses betaine aldehyde + NAD(+) + H2O = glycine betaine + NADH + 2 H(+). Its pathway is amine and polyamine biosynthesis; betaine biosynthesis via choline pathway; betaine from betaine aldehyde: step 1/1. Involved in the biosynthesis of the osmoprotectant glycine betaine. Catalyzes the irreversible oxidation of betaine aldehyde to the corresponding acid. This is Betaine aldehyde dehydrogenase from Pseudomonas aeruginosa (strain UCBPP-PA14).